Consider the following 195-residue polypeptide: Imidazoleglycerol-phosphate dehydratase (195 aa).

This sequence belongs to the imidazoleglycerol-phosphate dehydratase family.

It is found in the cytoplasm. The enzyme catalyses D-erythro-1-(imidazol-4-yl)glycerol 3-phosphate = 3-(imidazol-4-yl)-2-oxopropyl phosphate + H2O. It functions in the pathway amino-acid biosynthesis; L-histidine biosynthesis; L-histidine from 5-phospho-alpha-D-ribose 1-diphosphate: step 6/9. The polypeptide is Imidazoleglycerol-phosphate dehydratase (Geobacter metallireducens (strain ATCC 53774 / DSM 7210 / GS-15)).